The following is a 327-amino-acid chain: Aspartate--ammonia ligase (327 aa).

Belongs to the class-II aminoacyl-tRNA synthetase family. AsnA subfamily.

The protein resides in the cytoplasm. It catalyses the reaction L-aspartate + NH4(+) + ATP = L-asparagine + AMP + diphosphate + H(+). It participates in amino-acid biosynthesis; L-asparagine biosynthesis; L-asparagine from L-aspartate (ammonia route): step 1/1. The protein is Aspartate--ammonia ligase of Fusobacterium nucleatum subsp. nucleatum (strain ATCC 25586 / DSM 15643 / BCRC 10681 / CIP 101130 / JCM 8532 / KCTC 2640 / LMG 13131 / VPI 4355).